A 558-amino-acid chain; its full sequence is Putative ABC transporter ATP-binding protein SAG1633 (558 aa).

ABC transporter domains follow at residues 5–246 (IEWK…GIRE) and 295–527 (LSVQ…THLK). ATP contacts are provided by residues 39–46 (GPSGSGKS) and 328–335 (GKNGAGKS).

It belongs to the ABC transporter superfamily.

It localises to the cell membrane. Functionally, probably part of an ABC transporter complex. Responsible for energy coupling to the transport system. This is Putative ABC transporter ATP-binding protein SAG1633 from Streptococcus agalactiae serotype V (strain ATCC BAA-611 / 2603 V/R).